We begin with the raw amino-acid sequence, 282 residues long: Biotin synthase (282 aa).

Positions 1–228 (MQEIFLCSIS…NARLMVAGGR (228 aa)) constitute a Radical SAM core domain. [4Fe-4S] cluster is bound by residues Cys17, Cys21, and Cys24. 4 residues coordinate [2Fe-2S] cluster: Cys61, Cys96, Cys154, and Arg221.

It belongs to the radical SAM superfamily. Biotin synthase family. Homodimer. It depends on [4Fe-4S] cluster as a cofactor. The cofactor is [2Fe-2S] cluster.

It catalyses the reaction (4R,5S)-dethiobiotin + (sulfur carrier)-SH + 2 reduced [2Fe-2S]-[ferredoxin] + 2 S-adenosyl-L-methionine = (sulfur carrier)-H + biotin + 2 5'-deoxyadenosine + 2 L-methionine + 2 oxidized [2Fe-2S]-[ferredoxin]. The protein operates within cofactor biosynthesis; biotin biosynthesis; biotin from 7,8-diaminononanoate: step 2/2. Its function is as follows. Catalyzes the conversion of dethiobiotin (DTB) to biotin by the insertion of a sulfur atom into dethiobiotin via a radical-based mechanism. The sequence is that of Biotin synthase from Helicobacter pylori (strain G27).